A 1381-amino-acid polypeptide reads, in one-letter code: DNA-directed RNA polymerase subunit beta (1381 aa).

It belongs to the RNA polymerase beta chain family. The RNAP catalytic core consists of 2 alpha, 1 beta, 1 beta' and 1 omega subunit. When a sigma factor is associated with the core the holoenzyme is formed, which can initiate transcription.

It carries out the reaction RNA(n) + a ribonucleoside 5'-triphosphate = RNA(n+1) + diphosphate. In terms of biological role, DNA-dependent RNA polymerase catalyzes the transcription of DNA into RNA using the four ribonucleoside triphosphates as substrates. The chain is DNA-directed RNA polymerase subunit beta from Halorhodospira halophila (strain DSM 244 / SL1) (Ectothiorhodospira halophila (strain DSM 244 / SL1)).